We begin with the raw amino-acid sequence, 75 residues long: Cytochrome c oxidase subunit 6C (75 aa).

Residues 1-13 (MASSALAKPQMRG) are Mitochondrial matrix-facing. The helical transmembrane segment at 14–54 (LLARRLRIHIVGAFVVSLGVAAFYKYAVAEPRKKAYADFYR) threads the bilayer. Residues 55–75 (NYDSVKYFEEMRKAGVFQSVK) are Mitochondrial intermembrane-facing.

It belongs to the cytochrome c oxidase subunit 6c family. In terms of assembly, component of the cytochrome c oxidase (complex IV, CIV), a multisubunit enzyme composed of 14 subunits. The complex is composed of a catalytic core of 3 subunits MT-CO1, MT-CO2 and MT-CO3, encoded in the mitochondrial DNA, and 11 supernumerary subunits COX4I, COX5A, COX5B, COX6A, COX6B, COX6C, COX7A, COX7B, COX7C, COX8 and NDUFA4, which are encoded in the nuclear genome. The complex exists as a monomer or a dimer and forms supercomplexes (SCs) in the inner mitochondrial membrane with NADH-ubiquinone oxidoreductase (complex I, CI) and ubiquinol-cytochrome c oxidoreductase (cytochrome b-c1 complex, complex III, CIII), resulting in different assemblies (supercomplex SCI(1)III(2)IV(1) and megacomplex MCI(2)III(2)IV(2)).

It is found in the mitochondrion inner membrane. Its pathway is energy metabolism; oxidative phosphorylation. Its function is as follows. Component of the cytochrome c oxidase, the last enzyme in the mitochondrial electron transport chain which drives oxidative phosphorylation. The respiratory chain contains 3 multisubunit complexes succinate dehydrogenase (complex II, CII), ubiquinol-cytochrome c oxidoreductase (cytochrome b-c1 complex, complex III, CIII) and cytochrome c oxidase (complex IV, CIV), that cooperate to transfer electrons derived from NADH and succinate to molecular oxygen, creating an electrochemical gradient over the inner membrane that drives transmembrane transport and the ATP synthase. Cytochrome c oxidase is the component of the respiratory chain that catalyzes the reduction of oxygen to water. Electrons originating from reduced cytochrome c in the intermembrane space (IMS) are transferred via the dinuclear copper A center (CU(A)) of subunit 2 and heme A of subunit 1 to the active site in subunit 1, a binuclear center (BNC) formed by heme A3 and copper B (CU(B)). The BNC reduces molecular oxygen to 2 water molecules using 4 electrons from cytochrome c in the IMS and 4 protons from the mitochondrial matrix. The sequence is that of Cytochrome c oxidase subunit 6C (COX6C) from Nycticebus coucang (Slow loris).